The sequence spans 124 residues: Thioredoxin domain-containing protein C21C3.12c (124 aa).

The Thioredoxin domain occupies 37-124; the sequence is PWCPTVRAAL…ANKFSKFIDI (88 aa). C39 acts as the Nucleophile in catalysis.

Belongs to the thioredoxin family.

The protein resides in the cytoplasm. The protein localises to the nucleus. This is Thioredoxin domain-containing protein C21C3.12c from Schizosaccharomyces pombe (strain 972 / ATCC 24843) (Fission yeast).